The following is a 301-amino-acid chain: MTRHGKNCTAGAVYTYHEKKKDTAASGYGTQNIRLSRDAVKDFDCCCLSLQPCHDPVVTPDGYLYEREAILEYILHQKKEIARQMKAYEKQRGTRREEQKELQRAASQDHVRGFLEKESAIVSRPLNPFTAKALSGTSPDNAQPGPSVGPPSKDKDKVLPSFWIPSLTPEAKATKLEKPSRTVTCPMSGKPLRMSDLTPVHFTPLDSSVDRVGLITRSERYVCAVTRDSLSNATPCAVLRPSGAVVTLECVEKLIRKDMVDPVTGDKLTDRDIIVLQRGGTGFAGSGVKLQAEKSRPVMQA.

Ser36 is subject to Phosphoserine. Positions 55–75 (DPVVTPDGYLYEREAILEYIL) are U-box-like. Positions 78–101 (KKEIARQMKAYEKQRGTRREEQKE) match the Nuclear localization signal motif. Ser107 bears the Phosphoserine mark. The segment at 131–155 (AKALSGTSPDNAQPGPSVGPPSKDK) is disordered.

The protein belongs to the NOSIP family. In terms of assembly, interacts with NOS1 and NOS3. Interacts with PP2A holoenzyme, containing PPP2CA, PPP2CB, PPP2R1A and PPP2R2A subunits.

It localises to the cytoplasm. It is found in the nucleus. It carries out the reaction S-ubiquitinyl-[E2 ubiquitin-conjugating enzyme]-L-cysteine + [acceptor protein]-L-lysine = [E2 ubiquitin-conjugating enzyme]-L-cysteine + N(6)-ubiquitinyl-[acceptor protein]-L-lysine.. E3 ubiquitin-protein ligase that is essential for proper development of the forebrain, the eye, and the face. Catalyzes monoubiquitination of serine/threonine-protein phosphatase 2A (PP2A) catalytic subunit PPP2CA/PPP2CB. Negatively regulates nitric oxide production by inducing NOS1 and NOS3 translocation to actin cytoskeleton and inhibiting their enzymatic activity. This Macaca fascicularis (Crab-eating macaque) protein is Nitric oxide synthase-interacting protein (NOSIP).